Consider the following 230-residue polypeptide: Small ribosomal subunit protein uS3 (230 aa).

Residues 39–107 (VRNYLRQKLA…PIHVNIEEIR (69 aa)) enclose the KH type-2 domain. A disordered region spans residues 210-230 (SSKPEHESKQRKAGRRNAAAN).

The protein belongs to the universal ribosomal protein uS3 family. Part of the 30S ribosomal subunit. Forms a tight complex with proteins S10 and S14.

Binds the lower part of the 30S subunit head. Binds mRNA in the 70S ribosome, positioning it for translation. In Neisseria gonorrhoeae (strain ATCC 700825 / FA 1090), this protein is Small ribosomal subunit protein uS3.